A 337-amino-acid chain; its full sequence is Anthranilate phosphoribosyltransferase (337 aa).

Residues Gly79, Gly82–Asp83, Thr87, Asn89–Thr92, Lys107–Ser115, and Ser119 each bind 5-phospho-alpha-D-ribose 1-diphosphate. Gly79 serves as a coordination point for anthranilate. Ser91 provides a ligand contact to Mg(2+). Asn110 is a binding site for anthranilate. Anthranilate is bound at residue Arg165. Residues Asp223 and Glu224 each coordinate Mg(2+).

Belongs to the anthranilate phosphoribosyltransferase family. In terms of assembly, homodimer. It depends on Mg(2+) as a cofactor.

It carries out the reaction N-(5-phospho-beta-D-ribosyl)anthranilate + diphosphate = 5-phospho-alpha-D-ribose 1-diphosphate + anthranilate. It participates in amino-acid biosynthesis; L-tryptophan biosynthesis; L-tryptophan from chorismate: step 2/5. In terms of biological role, catalyzes the transfer of the phosphoribosyl group of 5-phosphorylribose-1-pyrophosphate (PRPP) to anthranilate to yield N-(5'-phosphoribosyl)-anthranilate (PRA). The protein is Anthranilate phosphoribosyltransferase of Aeromonas salmonicida (strain A449).